The following is a 146-amino-acid chain: 3-dehydroquinate dehydratase (146 aa).

Catalysis depends on Tyr24, which acts as the Proton acceptor. Substrate-binding residues include Asn75, His81, and Asp88. The active-site Proton donor is His101. Substrate contacts are provided by residues 102–103 and Arg112; that span reads LS.

It belongs to the type-II 3-dehydroquinase family. In terms of assembly, homododecamer.

The catalysed reaction is 3-dehydroquinate = 3-dehydroshikimate + H2O. It participates in metabolic intermediate biosynthesis; chorismate biosynthesis; chorismate from D-erythrose 4-phosphate and phosphoenolpyruvate: step 3/7. Catalyzes a trans-dehydration via an enolate intermediate. The protein is 3-dehydroquinate dehydratase of Caulobacter vibrioides (strain ATCC 19089 / CIP 103742 / CB 15) (Caulobacter crescentus).